The primary structure comprises 73 residues: Large ribosomal subunit protein bL31 (73 aa).

Zn(2+)-binding residues include Cys16, Cys18, Cys36, and Cys39.

The protein belongs to the bacterial ribosomal protein bL31 family. Type A subfamily. Part of the 50S ribosomal subunit. Zn(2+) serves as cofactor.

Functionally, binds the 23S rRNA. The polypeptide is Large ribosomal subunit protein bL31 (Desulfotalea psychrophila (strain LSv54 / DSM 12343)).